The following is a 234-amino-acid chain: Phosphatidylinositol phosphate synthase (234 aa).

2 helical membrane passes run 28–48 (LTPD…ALVL) and 54–70 (LFPG…FDML). 31-34 (DAVT) contributes to the a CDP-1,2-diacyl-sn-glycerol binding site. Mg(2+) is bound by residues aspartate 68 and aspartate 71. Positions 72, 76, and 82 each coordinate a CDP-1,2-diacyl-sn-glycerol. The Mg(2+) site is built by aspartate 89 and aspartate 93. 4 helical membrane passes run 91-110 (ACDR…WVAF), 116-134 (LLVV…ISYI), 155-173 (RLII…FIAW), and 179-197 (VAMW…QRLY). The active-site Proton acceptor is aspartate 93. Residues 211–234 (PSAPVRDDDAQGHPRSGDPGKTQR) are disordered. Basic and acidic residues predominate over residues 215-228 (VRDDDAQGHPRSGD).

It belongs to the CDP-alcohol phosphatidyltransferase class-I family. Homodimer. Mg(2+) serves as cofactor.

The protein resides in the cell membrane. The catalysed reaction is a CDP-1,2-diacyl-sn-glycerol + 1D-myo-inositol 3-phosphate = a 1,2-diacyl-sn-glycero-3-phospho-(1D-myo-inositol-3-phosphate) + CMP + H(+). The enzyme catalyses 1,2-di-(9Z-octadecenoyl)-sn-glycero-3-cytidine-5'-diphosphate + 1D-myo-inositol 3-phosphate = 1,2-di-(9Z-octadecenoyl)-sn-glycero-3-phospho-(1D-myo-inositol-3-phosphate) + CMP + H(+). The protein operates within phospholipid metabolism; phosphatidylinositol phosphate biosynthesis. Its function is as follows. Catalyzes the conjugation of the 1'-hydroxyl group of D-myo-inositol-3-phosphate (also named L-myo-inositol-1-phosphate) with a lipid tail of cytidine diphosphate diacylglycerol (CDP-DAG), forming phosphatidylinositol phosphate (PIP) and CMP. PIP is a precursor of phosphatidylinositol (PI) which is an essential lipid for mycobacteria required for formation of their cell wall. The protein is Phosphatidylinositol phosphate synthase of Mycobacterium marinum (strain ATCC BAA-535 / M).